A 106-amino-acid chain; its full sequence is Probable glutaredoxin (106 aa).

Positions 8–106 constitute a Glutaredoxin domain; that stretch reads IVQKITGADP…AKYLDVQFTQ (99 aa). C28 and C31 form a disulfide bridge.

Belongs to the glutaredoxin family.

The protein resides in the virion. The chain is Probable glutaredoxin from Acanthamoeba polyphaga mimivirus (APMV).